The sequence spans 171 residues: Large ribosomal subunit protein uL10 (171 aa).

The protein belongs to the universal ribosomal protein uL10 family. As to quaternary structure, part of the ribosomal stalk of the 50S ribosomal subunit. The N-terminus interacts with L11 and the large rRNA to form the base of the stalk. The C-terminus forms an elongated spine to which L12 dimers bind in a sequential fashion forming a multimeric L10(L12)X complex.

In terms of biological role, forms part of the ribosomal stalk, playing a central role in the interaction of the ribosome with GTP-bound translation factors. The polypeptide is Large ribosomal subunit protein uL10 (Erythrobacter litoralis (strain HTCC2594)).